The sequence spans 571 residues: Proline--tRNA ligase (571 aa).

Belongs to the class-II aminoacyl-tRNA synthetase family. ProS type 1 subfamily. As to quaternary structure, homodimer.

The protein localises to the cytoplasm. It catalyses the reaction tRNA(Pro) + L-proline + ATP = L-prolyl-tRNA(Pro) + AMP + diphosphate. Functionally, catalyzes the attachment of proline to tRNA(Pro) in a two-step reaction: proline is first activated by ATP to form Pro-AMP and then transferred to the acceptor end of tRNA(Pro). As ProRS can inadvertently accommodate and process non-cognate amino acids such as alanine and cysteine, to avoid such errors it has two additional distinct editing activities against alanine. One activity is designated as 'pretransfer' editing and involves the tRNA(Pro)-independent hydrolysis of activated Ala-AMP. The other activity is designated 'posttransfer' editing and involves deacylation of mischarged Ala-tRNA(Pro). The misacylated Cys-tRNA(Pro) is not edited by ProRS. This chain is Proline--tRNA ligase, found in Pasteurella multocida (strain Pm70).